The primary structure comprises 465 residues: Probable Xaa-Pro aminopeptidase PEPP (465 aa).

Asp-259, Asp-270, Glu-395, and Glu-435 together coordinate Mn(2+).

This sequence belongs to the peptidase M24B family. The cofactor is Mn(2+).

It catalyses the reaction Release of any N-terminal amino acid, including proline, that is linked to proline, even from a dipeptide or tripeptide.. Its function is as follows. Catalyzes the removal of a penultimate prolyl residue from the N-termini of peptides. The chain is Probable Xaa-Pro aminopeptidase PEPP (PEPP) from Pyricularia oryzae (strain 70-15 / ATCC MYA-4617 / FGSC 8958) (Rice blast fungus).